The following is a 125-amino-acid chain: Fluoride-specific ion channel FluC (125 aa).

4 helical membrane passes run 9-29 (LFCA…YGLL), 32-52 (AFPY…GLIM), 67-87 (IGLT…SYET), and 99-119 (AFTN…LGII). Residues Gly-75 and Thr-78 each contribute to the Na(+) site.

The protein belongs to the fluoride channel Fluc/FEX (TC 1.A.43) family.

The protein resides in the cell inner membrane. The enzyme catalyses fluoride(in) = fluoride(out). Na(+) is not transported, but it plays an essential structural role and its presence is essential for fluoride channel function. Its function is as follows. Fluoride-specific ion channel. Important for reducing fluoride concentration in the cell, thus reducing its toxicity. This Trichlorobacter lovleyi (strain ATCC BAA-1151 / DSM 17278 / SZ) (Geobacter lovleyi) protein is Fluoride-specific ion channel FluC.